Consider the following 776-residue polypeptide: MAAIAPAWPLDSLVASSPYWGLREQSFSQAADTLRLVADSPLHLPRGEYLAAWRRGEISAAALETALSETGWTGGAQAWLDAEPRDVDPVPPPRLLAACHREAAGPLSAQSWTDVVIQQISQYCAAWFDRDQANWHLDHERGFYAAWLEQMRHPYGLSALPERREQLRLRAERLPGDAEAMLAAGLAQLQAEPEWLKPWLQALLMRNNGWAAWCAYLGWQAGLKGETDGHLRQLLAIQMAWECLLDDGARGPDSAWAAWHRDWGLRLHGRADPRTLIWQRAHELSLHAPLAQALCRESAAEDGTRPAMQAVFCIDVRSEPLRRALEQTVPASRTYGFAGFFGLPLAYRVPGSDVAQPRLPVLLAPGWEASAAPASKPSAARRGWRAFQRSPLSGFALVESAGLAKLAALAGRSKARGRQAALPQLDPWLTPDSAKPVPRDGLGLERRAEIVSGLLPAMGLAGALAPWVLLVGHASHVSNNPQAAALQCGACGGHGGHQHVRLLAGWLNDPALRERLAALGRAIPADTVFLPALHLTHSDEILLLDADTLSADARARLPGLQAQLRAASALARRRRAPLVGLAPEADDAILLNKMRQKGDDWAETRPEWGLAGNALFIAAPRAKTRKLDLGGRAFLHEYDWRADPDGKGLQAILAAPMVVAHWINMQYFASTADPRRFGSGNKLLHNVVGGRIGVFEGNSGDLRIGLAWQSVHDGQRLRHAPLRLAACIDAPPDRLAEALAAQPVPRQLAENGWLHLYCVHGDTPLRWHADGGWRHD.

Residues Cys313, Asp315, His473, and Cys488 each coordinate Zn(2+).

This sequence belongs to the inorganic carbon transporter (TC 9.A.2) DabA family. In terms of assembly, forms a complex with DabB. Zn(2+) serves as cofactor.

The protein resides in the cell inner membrane. In terms of biological role, part of an energy-coupled inorganic carbon pump. The chain is Probable inorganic carbon transporter subunit DabA from Chromobacterium violaceum (strain ATCC 12472 / DSM 30191 / JCM 1249 / CCUG 213 / NBRC 12614 / NCIMB 9131 / NCTC 9757 / MK).